A 350-amino-acid chain; its full sequence is Methylthioribose-1-phosphate isomerase (350 aa).

Residues 48–50 (RGA), Arg93, and Gln198 each bind substrate. Asp239 acts as the Proton donor in catalysis. 249–250 (NK) contributes to the substrate binding site.

It belongs to the eIF-2B alpha/beta/delta subunits family. MtnA subfamily.

It carries out the reaction 5-(methylsulfanyl)-alpha-D-ribose 1-phosphate = 5-(methylsulfanyl)-D-ribulose 1-phosphate. It participates in amino-acid biosynthesis; L-methionine biosynthesis via salvage pathway; L-methionine from S-methyl-5-thio-alpha-D-ribose 1-phosphate: step 1/6. In terms of biological role, catalyzes the interconversion of methylthioribose-1-phosphate (MTR-1-P) into methylthioribulose-1-phosphate (MTRu-1-P). The protein is Methylthioribose-1-phosphate isomerase of Fervidobacterium nodosum (strain ATCC 35602 / DSM 5306 / Rt17-B1).